A 497-amino-acid chain; its full sequence is Cysteine--tRNA ligase (497 aa).

Residue C34 coordinates Zn(2+). A 'HIGH' region motif is present at residues 36-46 (PTVYDFAHIGN). The Zn(2+) site is built by C243, H268, and E272. A 'KMSKS' region motif is present at residues 301 to 305 (KMAKS). Residue K304 participates in ATP binding. The tract at residues 478–497 (LMDYKDPETGERRTKWEVKR) is disordered. Residues 480–497 (DYKDPETGERRTKWEVKR) are compositionally biased toward basic and acidic residues.

Belongs to the class-I aminoacyl-tRNA synthetase family. As to quaternary structure, monomer. Zn(2+) serves as cofactor.

The protein localises to the cytoplasm. The enzyme catalyses tRNA(Cys) + L-cysteine + ATP = L-cysteinyl-tRNA(Cys) + AMP + diphosphate. The sequence is that of Cysteine--tRNA ligase from Chelativorans sp. (strain BNC1).